The primary structure comprises 281 residues: Hepatitis A virus cellular receptor 2 homolog (281 aa).

Residues 1–19 form the signal peptide; the sequence is MFSGLTLNCVLLLLQLLLA. Residues 20–125 enclose the Ig-like V-type domain; that stretch reads RSLENAYVFE…PGLMNDKKLE (106 aa). The Extracellular portion of the chain corresponds to 20-193; sequence RSLENAYVFE…KDSGETIRTA (174 aa). 3 cysteine pairs are disulfide-bonded: Cys38/Cys111, Cys52/Cys63, and Cys58/Cys110. Positions 61 and 62 each coordinate a 1,2-diacyl-sn-glycero-3-phospho-L-serine. 2 N-linked (GlcNAc...) asparagine glycosylation sites follow: Asn74 and Asn100. A 1,2-diacyl-sn-glycero-3-phospho-L-serine is bound at residue Arg112. Ca(2+) contacts are provided by Phe115 and Gly117. Met119 contacts a 1,2-diacyl-sn-glycero-3-phospho-L-serine. A Ca(2+)-binding site is contributed by Asn120. Residues 139–160 form a disordered region; the sequence is QTAHGDSTTASPRTLTTERNGS. The O-linked (GalNAc...) threonine glycan is linked to Thr146. An N-linked (GlcNAc...) asparagine glycan is attached at Asn172. The chain crosses the membrane as a helical span at residues 194–214; it reads IHIGVGVSAGLTLALIIGVLI. The Cytoplasmic segment spans residues 215-281; that stretch reads LKWYSCKKKK…YCYVNSQQPS (67 aa). An interaction with BAG6 region spans residues 252-270; the sequence is EENIYTIEENVYEVENSNE. The residue at position 256 (Tyr256) is a Phosphotyrosine; by ITK.

The protein belongs to the immunoglobulin superfamily. TIM family. Interacts with HMGB1; impairs HMGB1 binding to B-DNA and likely HMGB1-mediated innate immune response. Interacts with BAG6. Interacts (phosphorylated) with PIK3R1 and PIK3R2. Interacts (not dependent on its phosphorylation status) with FYN. Interacts (in basal state T-cells) with VAV1; AKT1/2, LCP2, ZAP70, SYK, PIK3R1, FYN, SH3BP2 and SH2D2A. Interacts (in activated T-cells) with LCK and PLCG. Interacts with ILF3; this interaction promotes ILF3 ubiquitination and degradation. Post-translationally, phosphorylated on tyrosine residues; modestly increased after TCR/CD28 stimulation. Can be phosphorylated in the cytoplasmic domain by FYN. Phosphorylation at Tyr-256 is increased by stimulation with ligand LGALS9. In terms of processing, N-glycosylated. As to expression, expressed in T-helper type 1 lymphocytes. Not expressed by naive T-cells but up-regulated as they differentiate into T-helper-1 cells. Also expressed by differentiated type 1 CD8+ cytotoxic T-cells. Expressed on peritoneal exudate macrophages, monocytes, and splenic dendritic cells (DCs). Expression on natural killer (NK) cells is inversely associated with IFN-gamma production during the initial 24 hours of LPS-induced endotoxic shock. Expressed on mast cells.

Its subcellular location is the membrane. The protein resides in the cell junction. The protein localises to the secreted. Functionally, cell surface receptor implicated in modulating innate and adaptive immune responses. Generally accepted to have an inhibiting function. Reports on stimulating functions suggest that the activity may be influenced by the cellular context and/or the respective ligand. Regulates macrophage activation. Inhibits T-helper type 1 lymphocyte (Th1)-mediated auto- and alloimmune responses and promotes immunological tolerance. In CD8+ cells attenuates TCR-induced signaling, specifically by blocking NF-kappaB and NFAT promoter activities resulting in the loss of IL-2 secretion. The function may implicate its association with LCK proposed to impair phosphorylation of TCR subunits. In contrast, shown to activate TCR-induced signaling in T-cells probably implicating ZAP70, LCP2, LCK and FYN. Expressed on Treg cells can inhibit Th17 cell responses. Receptor for LGALS9. Binding to LGALS9 is believed to result in suppression of T-cell responses; the resulting apoptosis of antigen-specific cells may implicate HAVCR2 phosphorylation and disruption of its association with BAG6. Binding to LGALS9 is proposed to be involved in innate immune response to intracellular pathogens. Expressed on Th1 cells interacts with LGALS9 expressed on Mycobacterium tuberculosis-infected macrophages to stimulate antibactericidal activity including IL-1 beta secretion and to restrict intracellular bacterial growth. However, the function as receptor for LGALS9 has been challenged. Also reported to enhance CD8+ T-cell responses to an acute infection such as by Listeria monocytogenes. Receptor for phosphatidylserine (PtSer); PtSer-binding is calcium-dependent. May recognize PtSer on apoptotic cells leading to their phagocytosis. Mediates the engulfment of apoptotic cells by dendritic cells. Expressed on T-cells, promotes conjugation but not engulfment of apoptotic cells. Expressed on dendritic cells (DCs) positively regulates innate immune response and in synergy with Toll-like receptors promotes secretion of TNF-alpha. In tumor-imfiltrating DCs suppresses nucleic acid-mediated innate immune repsonse by interaction with HMGB1 and interfering with nucleic acid-sensing and trafficking of nucleid acids to endosomes. Can enhance mast cell production of Th2 cytokines Il-4, IL-6 and IL-13. Expressed on natural killer (NK) cells acts as a coreceptor to enhance IFN-gamma production in response to LGALS9. In contrast, shown to suppress NK cell-mediated cytotoxicity. Negatively regulates NK cell function in LPS-induced endotoxic shock. The chain is Hepatitis A virus cellular receptor 2 homolog (Havcr2) from Mus musculus (Mouse).